Here is a 934-residue protein sequence, read N- to C-terminus: Phosphoenolpyruvate carboxylase (934 aa).

Residues histidine 161 and lysine 593 contribute to the active site.

This sequence belongs to the PEPCase type 1 family. Mg(2+) serves as cofactor.

It catalyses the reaction oxaloacetate + phosphate = phosphoenolpyruvate + hydrogencarbonate. Functionally, forms oxaloacetate, a four-carbon dicarboxylic acid source for the tricarboxylic acid cycle. The chain is Phosphoenolpyruvate carboxylase (ppc) from Mycobacterium leprae (strain TN).